The chain runs to 332 residues: Fructose-bisphosphate aldolase (332 aa).

Residue Ser56 coordinates D-glyceraldehyde 3-phosphate. The active-site Proton donor is the Asp93. Zn(2+)-binding residues include His94, Asp115, Glu147, and His191. Residue Gly192 participates in dihydroxyacetone phosphate binding. His234 is a Zn(2+) binding site. Residues 235-237 (GAS) and 277-280 (NIDS) contribute to the dihydroxyacetone phosphate site.

The protein belongs to the class II fructose-bisphosphate aldolase family. Homodimer. The cofactor is Zn(2+).

The catalysed reaction is beta-D-fructose 1,6-bisphosphate = D-glyceraldehyde 3-phosphate + dihydroxyacetone phosphate. Its pathway is carbohydrate degradation; glycolysis; D-glyceraldehyde 3-phosphate and glycerone phosphate from D-glucose: step 4/4. Its function is as follows. Catalyzes the aldol condensation of dihydroxyacetone phosphate (DHAP or glycerone-phosphate) with glyceraldehyde 3-phosphate (G3P) to form fructose 1,6-bisphosphate (FBP) in gluconeogenesis and the reverse reaction in glycolysis. This is Fructose-bisphosphate aldolase (fba) from Treponema pallidum (strain Nichols).